A 202-amino-acid chain; its full sequence is Putative 3-methyladenine DNA glycosylase (202 aa).

This sequence belongs to the DNA glycosylase MPG family.

The chain is Putative 3-methyladenine DNA glycosylase from Clostridium botulinum (strain Alaska E43 / Type E3).